A 458-amino-acid polypeptide reads, in one-letter code: Cytoplasmic tRNA 2-thiolation protein 2 (458 aa).

Belongs to the CTU2/NCS2 family.

It is found in the cytoplasm. Its pathway is tRNA modification; 5-methoxycarbonylmethyl-2-thiouridine-tRNA biosynthesis. Plays a central role in 2-thiolation of mcm(5)S(2)U at tRNA wobble positions of tRNA(Lys), tRNA(Glu) and tRNA(Gln). May act by forming a heterodimer with NCS6/CTU1 that ligates sulfur from thiocarboxylated URM1 onto the uridine of tRNAs at wobble position. The chain is Cytoplasmic tRNA 2-thiolation protein 2 from Arabidopsis thaliana (Mouse-ear cress).